A 177-amino-acid chain; its full sequence is Probasin (177 aa).

A signal peptide spans 1–17; sequence MRVILLLLTLDVLGVSS. Residues Cys-79 and Cys-170 are joined by a disulfide bond.

The protein belongs to the calycin superfamily. Lipocalin family. As to expression, prostatic epithelial cells.

Its subcellular location is the nucleus. The protein localises to the secreted. This chain is Probasin (Pbsn), found in Rattus norvegicus (Rat).